The sequence spans 253 residues: Adenosylcobinamide-GDP ribazoletransferase (253 aa).

4 helical membrane passes run 33 to 53 (ISPI…YLIL), 106 to 126 (VGSG…VALL), 132 to 152 (LYTI…SLYI), and 178 to 198 (ILLL…FIIF).

This sequence belongs to the CobS family. Mg(2+) is required as a cofactor.

It is found in the cell membrane. It catalyses the reaction alpha-ribazole + adenosylcob(III)inamide-GDP = adenosylcob(III)alamin + GMP + H(+). The catalysed reaction is alpha-ribazole 5'-phosphate + adenosylcob(III)inamide-GDP = adenosylcob(III)alamin 5'-phosphate + GMP + H(+). Its pathway is cofactor biosynthesis; adenosylcobalamin biosynthesis; adenosylcobalamin from cob(II)yrinate a,c-diamide: step 7/7. Joins adenosylcobinamide-GDP and alpha-ribazole to generate adenosylcobalamin (Ado-cobalamin). Also synthesizes adenosylcobalamin 5'-phosphate from adenosylcobinamide-GDP and alpha-ribazole 5'-phosphate. The sequence is that of Adenosylcobinamide-GDP ribazoletransferase from Saccharolobus solfataricus (strain ATCC 35092 / DSM 1617 / JCM 11322 / P2) (Sulfolobus solfataricus).